Here is a 490-residue protein sequence, read N- to C-terminus: Glutamate--tRNA ligase (490 aa).

The 'HIGH' region motif lies at 9–19; that stretch reads PSPTGLQHIGG. A 'KMSKS' region motif is present at residues 251-255; sequence KLSKR. Lys-254 contacts ATP.

It belongs to the class-I aminoacyl-tRNA synthetase family. Glutamate--tRNA ligase type 1 subfamily. In terms of assembly, monomer.

The protein localises to the cytoplasm. The enzyme catalyses tRNA(Glu) + L-glutamate + ATP = L-glutamyl-tRNA(Glu) + AMP + diphosphate. Catalyzes the attachment of glutamate to tRNA(Glu) in a two-step reaction: glutamate is first activated by ATP to form Glu-AMP and then transferred to the acceptor end of tRNA(Glu). The polypeptide is Glutamate--tRNA ligase (Borreliella burgdorferi (strain ATCC 35210 / DSM 4680 / CIP 102532 / B31) (Borrelia burgdorferi)).